Consider the following 324-residue polypeptide: UDP-N-acetylenolpyruvoylglucosamine reductase (324 aa).

An FAD-binding PCMH-type domain is found at F36–D211. R183 is an active-site residue. The Proton donor role is filled by S232. E302 is an active-site residue.

Belongs to the MurB family. FAD is required as a cofactor.

Its subcellular location is the cytoplasm. It carries out the reaction UDP-N-acetyl-alpha-D-muramate + NADP(+) = UDP-N-acetyl-3-O-(1-carboxyvinyl)-alpha-D-glucosamine + NADPH + H(+). Its pathway is cell wall biogenesis; peptidoglycan biosynthesis. Functionally, cell wall formation. The sequence is that of UDP-N-acetylenolpyruvoylglucosamine reductase from Sinorhizobium medicae (strain WSM419) (Ensifer medicae).